We begin with the raw amino-acid sequence, 201 residues long: UPF0301 protein Mvan_6057 (201 aa).

It belongs to the UPF0301 (AlgH) family.

This chain is UPF0301 protein Mvan_6057, found in Mycolicibacterium vanbaalenii (strain DSM 7251 / JCM 13017 / BCRC 16820 / KCTC 9966 / NRRL B-24157 / PYR-1) (Mycobacterium vanbaalenii).